Here is a 393-residue protein sequence, read N- to C-terminus: Flavohemoprotein (393 aa).

The Globin domain maps to 1 to 139 (MLSAEHRAIV…LADLLIGLEE (139 aa)). Position 85 (histidine 85) interacts with heme b. Residues tyrosine 95 and glutamate 138 each act as charge relay system in the active site. The reductase stretch occupies residues 150–393 (GGWRGTRAFV…EFFGPASALD (244 aa)). The FAD-binding FR-type domain occupies 153-256 (RGTRAFVVAR…LTPSGDFTLE (104 aa)). Residues tyrosine 191 and 205 to 208 (RNYS) contribute to the FAD site. 268 to 273 (GVGITP) lines the NADP(+) pocket. 385 to 388 (FFGP) provides a ligand contact to FAD.

The protein belongs to the globin family. Two-domain flavohemoproteins subfamily. It in the C-terminal section; belongs to the flavoprotein pyridine nucleotide cytochrome reductase family. The cofactor is heme b. FAD serves as cofactor.

The catalysed reaction is 2 nitric oxide + NADPH + 2 O2 = 2 nitrate + NADP(+) + H(+). It catalyses the reaction 2 nitric oxide + NADH + 2 O2 = 2 nitrate + NAD(+) + H(+). Functionally, is involved in NO detoxification in an aerobic process, termed nitric oxide dioxygenase (NOD) reaction that utilizes O(2) and NAD(P)H to convert NO to nitrate, which protects the bacterium from various noxious nitrogen compounds. Therefore, plays a central role in the inducible response to nitrosative stress. The chain is Flavohemoprotein from Burkholderia sp. (strain TH2).